A 482-amino-acid polypeptide reads, in one-letter code: 2-succinylbenzoate--CoA ligase (482 aa).

This sequence belongs to the ATP-dependent AMP-binding enzyme family. MenE subfamily.

The catalysed reaction is 2-succinylbenzoate + ATP + CoA = 2-succinylbenzoyl-CoA + AMP + diphosphate. It functions in the pathway quinol/quinone metabolism; 1,4-dihydroxy-2-naphthoate biosynthesis; 1,4-dihydroxy-2-naphthoate from chorismate: step 5/7. The protein operates within quinol/quinone metabolism; menaquinone biosynthesis. Functionally, converts 2-succinylbenzoate (OSB) to 2-succinylbenzoyl-CoA (OSB-CoA). The polypeptide is 2-succinylbenzoate--CoA ligase (Bacillus anthracis (strain A0248)).